We begin with the raw amino-acid sequence, 461 residues long: Cysteine--tRNA ligase (461 aa).

Cys28 contributes to the Zn(2+) binding site. The 'HIGH' region signature appears at 30 to 40 (VTIYDLCHIGH). Zn(2+)-binding residues include Cys211, His236, and Glu240. Residues 268-272 (KMSKS) carry the 'KMSKS' region motif. An ATP-binding site is contributed by Lys271.

It belongs to the class-I aminoacyl-tRNA synthetase family. In terms of assembly, monomer. It depends on Zn(2+) as a cofactor.

It localises to the cytoplasm. The enzyme catalyses tRNA(Cys) + L-cysteine + ATP = L-cysteinyl-tRNA(Cys) + AMP + diphosphate. The sequence is that of Cysteine--tRNA ligase from Aliivibrio fischeri (strain ATCC 700601 / ES114) (Vibrio fischeri).